A 553-amino-acid chain; its full sequence is Phospholipase-B 81 (553 aa).

A signal peptide spans 1–35 (MVRFGSAASSDNRRRRCWSWYWGGLLLLWAVAETR). N-linked (GlcNAc...) asparagine glycans are attached at residues asparagine 69, asparagine 313, asparagine 416, and asparagine 531.

Belongs to the phospholipase B-like family. As to expression, expressed by the venom gland.

The protein localises to the secreted. Functionally, may cause hemolysis. This Drysdalia coronoides (White-lipped snake) protein is Phospholipase-B 81.